The sequence spans 324 residues: tRNA N6-adenosine threonylcarbamoyltransferase (324 aa).

Positions 107, 111, and 127 each coordinate Fe cation. Substrate-binding positions include 127–131, Asp-159, Gly-172, Glu-176, and Asn-257; that span reads YVSGG. Asp-285 lines the Fe cation pocket.

It belongs to the KAE1 / TsaD family. As to quaternary structure, monomer. Component of the KEOPS complex that consists of Kae1, Bud32, Cgi121 and Pcc1; the whole complex dimerizes. It depends on Fe(2+) as a cofactor.

The protein localises to the cytoplasm. The catalysed reaction is L-threonylcarbamoyladenylate + adenosine(37) in tRNA = N(6)-L-threonylcarbamoyladenosine(37) in tRNA + AMP + H(+). Functionally, required for the formation of a threonylcarbamoyl group on adenosine at position 37 (t(6)A37) in tRNAs that read codons beginning with adenine. Is a component of the KEOPS complex that is probably involved in the transfer of the threonylcarbamoyl moiety of threonylcarbamoyl-AMP (TC-AMP) to the N6 group of A37. Kae1 likely plays a direct catalytic role in this reaction, but requires other protein(s) of the complex to fulfill this activity. This chain is tRNA N6-adenosine threonylcarbamoyltransferase, found in Thermococcus sibiricus (strain DSM 12597 / MM 739).